The sequence spans 238 residues: Outer membrane protein A (238 aa).

Transmembrane regions (beta stranded) follow at residues 1–8 (LTAKLGYP), 13–21 (LDIYTRLGG), 43–52 (PVFAGGVEYA), 57–64 (IATRLEYQ), and 83–91 (LLSVGVSYR). Repeat copies occupy residues 104-105 (AP), 106-107 (AP), and 108-109 (AP). A 3 X 2 AA tandem repeats of A-P region spans residues 104-109 (APAPAP). One can recognise an OmpA-like domain in the interval 111–238 (VQTKHFTLKS…RRVEIEVKGI (128 aa)). C212 and C224 form a disulfide bridge.

The protein belongs to the outer membrane OOP (TC 1.B.6) superfamily. OmpA family. As to quaternary structure, monomer and homodimer.

Its subcellular location is the cell outer membrane. Its function is as follows. With TolR probably plays a role in maintaining the position of the peptidoglycan cell wall in the periplasm. Acts as a porin with low permeability that allows slow penetration of small solutes; an internal gate slows down solute passage. The protein is Outer membrane protein A of Citrobacter freundii.